The primary structure comprises 965 residues: Sarcosine oxidase subunit alpha (965 aa).

Residues Ala-139, Asp-158, Glu-159, Arg-160, Thr-166, Val-205, Ala-418, Leu-423, and Thr-425 each coordinate NAD(+). Residues Thr-692 and Glu-784 each coordinate (6R)-5,10-methylene-5,6,7,8-tetrahydrofolate.

This sequence belongs to the GcvT family. As to quaternary structure, heterotetramer composed of subunits alpha (SoxA), beta (SoxB), gamma (SoxG) and delta (SoxD). It depends on NAD(+) as a cofactor.

The protein localises to the cytoplasm. The enzyme catalyses sarcosine + (6S)-5,6,7,8-tetrahydrofolate + O2 = (6R)-5,10-methylene-5,6,7,8-tetrahydrofolate + glycine + H2O2. It catalyses the reaction sarcosine + O2 + H2O = formaldehyde + glycine + H2O2. Inhibited by Zn(2+), Cu(2+), Cd(2+), Hg(2+), Ag(+), p-chloromercuribenzoate (p-CMB), iodoacetamide, N-ethylmaleimide, CN(-), o-phenanthroline and sodium lauryl sulfate. Its function is as follows. In the presence of tetrahydrofolate, catalyzes the oxidative demethylation of sarcosine to yield glycine, 5,10-methylenetetrahydrofolate and hydrogen peroxide. In the absence of tetrahydrofolate, catalyzes the oxidative demethylation of sarcosine to yield glycine, formaldehyde and hydrogen peroxide. Can also use N-methyl-L-alanine and N-ethyl-L-glycine. Is very specific for oxygen as an acceptor. This Corynebacterium sp. (strain U-96) protein is Sarcosine oxidase subunit alpha.